The chain runs to 129 residues: Phosphoribosyl-AMP cyclohydrolase (129 aa).

Position 85 (Asp85) interacts with Mg(2+). Cys86 contributes to the Zn(2+) binding site. Positions 87 and 89 each coordinate Mg(2+). Residues Cys102 and Cys109 each contribute to the Zn(2+) site.

The protein belongs to the PRA-CH family. As to quaternary structure, homodimer. Mg(2+) serves as cofactor. Zn(2+) is required as a cofactor.

Its subcellular location is the cytoplasm. It catalyses the reaction 1-(5-phospho-beta-D-ribosyl)-5'-AMP + H2O = 1-(5-phospho-beta-D-ribosyl)-5-[(5-phospho-beta-D-ribosylamino)methylideneamino]imidazole-4-carboxamide. It participates in amino-acid biosynthesis; L-histidine biosynthesis; L-histidine from 5-phospho-alpha-D-ribose 1-diphosphate: step 3/9. Functionally, catalyzes the hydrolysis of the adenine ring of phosphoribosyl-AMP. The chain is Phosphoribosyl-AMP cyclohydrolase from Methanococcus maripaludis (strain C7 / ATCC BAA-1331).